Consider the following 157-residue polypeptide: MIVLGIDPALGSLGWAVVAKESAKLKYLASGVIKTSSKDEIHHRLSYINSILEKVILEYKPNMAAIEETFVNTNSVTSLKLGYARGAIMSLIGRYDLDMREFKPNTIKKTVTGYGHAEKDQILHMIKLLLPGTAAITNSDEADAVAIAYTCLVTKNY.

Active-site residues include aspartate 7, glutamate 67, and aspartate 140. Mg(2+) is bound by residues aspartate 7, glutamate 67, and aspartate 140.

This sequence belongs to the RuvC family. As to quaternary structure, homodimer which binds Holliday junction (HJ) DNA. The HJ becomes 2-fold symmetrical on binding to RuvC with unstacked arms; it has a different conformation from HJ DNA in complex with RuvA. In the full resolvosome a probable DNA-RuvA(4)-RuvB(12)-RuvC(2) complex forms which resolves the HJ. Requires Mg(2+) as cofactor.

It localises to the cytoplasm. The catalysed reaction is Endonucleolytic cleavage at a junction such as a reciprocal single-stranded crossover between two homologous DNA duplexes (Holliday junction).. In terms of biological role, the RuvA-RuvB-RuvC complex processes Holliday junction (HJ) DNA during genetic recombination and DNA repair. Endonuclease that resolves HJ intermediates. Cleaves cruciform DNA by making single-stranded nicks across the HJ at symmetrical positions within the homologous arms, yielding a 5'-phosphate and a 3'-hydroxyl group; requires a central core of homology in the junction. The consensus cleavage sequence is 5'-(A/T)TT(C/G)-3'. Cleavage occurs on the 3'-side of the TT dinucleotide at the point of strand exchange. HJ branch migration catalyzed by RuvA-RuvB allows RuvC to scan DNA until it finds its consensus sequence, where it cleaves and resolves the cruciform DNA. The protein is Crossover junction endodeoxyribonuclease RuvC of Rickettsia bellii (strain RML369-C).